The chain runs to 705 residues: Lethal(3)malignant brain tumor-like protein 2 (705 aa).

Positions 1 to 84 (MEKPRSIEET…GTPRSLDGSG (84 aa)) are disordered. Serine 13 bears the Phosphoserine mark. The segment covering 15–25 (PMEEEEDDDLE) has biased composition (acidic residues). Positions 38 to 49 (SSVGSESSSYLE) are enriched in low complexity. Positions 50–60 (ESSEAENEDRE) are enriched in acidic residues. At serine 67 the chain carries Phosphoserine. At threonine 76 the chain carries Phosphothreonine. An FCS-type zinc finger spans residues 81–116 (DGSGSEPAVCEMCGIVGTREAFFSKTKRFCSVSCSR). Cysteine 90, cysteine 93, cysteine 110, and cysteine 114 together coordinate Zn(2+). 4 MBT repeats span residues 179-283 (FDWG…LVPP), 291-391 (TDWK…IKMS), 397-500 (MAHH…LTPP), and 508-604 (FNWE…LQPP). Serine 338 carries the post-translational modification Phosphoserine. Lysine 405 is covalently cross-linked (Glycyl lysine isopeptide (Lys-Gly) (interchain with G-Cter in SUMO2)). The interval 608–665 (EPATPLKAKEATKKKKKQFGKKRKRIPPTKTRPLRQGSKKPLLEDDPQGARKISSEPV) is disordered. Over residues 619 to 634 (TKKKKKQFGKKRKRIP) the composition is skewed to basic residues. Residues lysine 647, lysine 659, and lysine 675 each participate in a glycyl lysine isopeptide (Lys-Gly) (interchain with G-Cter in SUMO2) cross-link. A disordered region spans residues 680–705 (DVASPDKASSPELPVSVENIKQETDD). 3 positions are modified to phosphoserine: serine 683, serine 688, and serine 689. A Glycyl lysine isopeptide (Lys-Gly) (interchain with G-Cter in SUMO1); alternate cross-link involves residue lysine 700. Lysine 700 is covalently cross-linked (Glycyl lysine isopeptide (Lys-Gly) (interchain with G-Cter in SUMO2); alternate).

In terms of assembly, part of the E2F6.com-1 complex in G0 phase composed of E2F6, MGA, MAX, TFDP1, CBX3, BAT8, EUHMTASE1, RING1, RNF2, MBLR, BAT8 and YAF2.

It is found in the nucleus. Functionally, putative Polycomb group (PcG) protein. PcG proteins maintain the transcriptionally repressive state of genes, probably via a modification of chromatin, rendering it heritably changed in its expressibility. Its association with a chromatin-remodeling complex suggests that it may contribute to prevent expression of genes that trigger the cell into mitosis. Binds to monomethylated and dimethylated 'Lys-20' on histone H4. Binds histone H3 peptides that are monomethylated or dimethylated on 'Lys-4', 'Lys-9' or 'Lys-27'. This Homo sapiens (Human) protein is Lethal(3)malignant brain tumor-like protein 2 (L3MBTL2).